The sequence spans 302 residues: Sulfate adenylyltransferase subunit 2 (302 aa).

The protein belongs to the PAPS reductase family. CysD subfamily. As to quaternary structure, heterodimer composed of CysD, the smaller subunit, and CysN.

The catalysed reaction is sulfate + ATP + H(+) = adenosine 5'-phosphosulfate + diphosphate. Its pathway is sulfur metabolism; hydrogen sulfide biosynthesis; sulfite from sulfate: step 1/3. Functionally, with CysN forms the ATP sulfurylase (ATPS) that catalyzes the adenylation of sulfate producing adenosine 5'-phosphosulfate (APS) and diphosphate, the first enzymatic step in sulfur assimilation pathway. APS synthesis involves the formation of a high-energy phosphoric-sulfuric acid anhydride bond driven by GTP hydrolysis by CysN coupled to ATP hydrolysis by CysD. This Yersinia pestis bv. Antiqua (strain Nepal516) protein is Sulfate adenylyltransferase subunit 2.